The primary structure comprises 78 residues: Large ribosomal subunit protein bL28 (78 aa).

The tract at residues 1-28 is disordered; it reads MSAYCQVTGRKPGFGKQVSHSHRHTSRR.

It belongs to the bacterial ribosomal protein bL28 family.

The chain is Large ribosomal subunit protein bL28 from Corynebacterium urealyticum (strain ATCC 43042 / DSM 7109).